A 393-amino-acid chain; its full sequence is Putative B3 domain-containing protein Os06g0632500 (393 aa).

DNA-binding regions (TF-B3) lie at residues 27 to 123, 141 to 238, and 316 to 393; these read LSVP…FDPG, RPRF…FLQN, and NSFT…VQRR.

It localises to the nucleus. The polypeptide is Putative B3 domain-containing protein Os06g0632500 (Oryza sativa subsp. japonica (Rice)).